A 465-amino-acid chain; its full sequence is Putative apoptosis inhibitor ORF106 (465 aa).

One copy of the BIR repeat lies at 291 to 357 (RECSFSTWPK…MEKETCGWLE (67 aa)). Residues 373–382 (EGGEDKEEDG) are compositionally biased toward acidic residues. The segment at 373–393 (EGGEDKEEDGGGGGVIEFPKN) is disordered. Residues 405 to 447 (CKACYERKADIAFIPCGHVFSCNICTMEMFASYKKKKRCPMCR) form an RING-type zinc finger.

This Magallana gigas (Pacific oyster) protein is Putative apoptosis inhibitor ORF106.